Reading from the N-terminus, the 227-residue chain is DNA repair protein RecO (227 aa).

Belongs to the RecO family.

Involved in DNA repair and RecF pathway recombination. This Pseudomonas syringae pv. syringae (strain B728a) protein is DNA repair protein RecO.